A 99-amino-acid polypeptide reads, in one-letter code: MSKFTFKILWLENNIAIAIDYNIGNNKSPLTSYFFWPRNDAWEELKIELESKPWINKNEKVDLLNKTTEIINFWQEKEKNTSLRKAKEKFPEFNFIGTN.

The protein belongs to the chloroplast-specific ribosomal protein cS23 family. Part of the 30S ribosomal subunit.

The protein localises to the plastid. It localises to the chloroplast. Its function is as follows. Probably a ribosomal protein or a ribosome-associated protein. In Gracilaria tenuistipitata var. liui (Red alga), this protein is Small ribosomal subunit protein cS23.